The following is a 911-amino-acid chain: Inter-alpha-trypsin inhibitor heavy chain H1 (911 aa).

Residues 1–27 (MDGAMGPRGLLLCMYLVSLLILQAMPA) form the signal peptide. Residues 28-34 (LGSATGR) constitute a propeptide that is removed on maturation. The region spanning 37-166 (SSEKRQAVDT…KVTFQLTYEE (130 aa)) is the VIT domain. Residue cysteine 60 is glycosylated (S-linked (Hex...) cysteine). Residue serine 129 is modified to Phosphoserine. Positions 181-184 (VKPK) match the Phagocytosis uptake signal motif. 2 disulfide bridges follow: cysteine 244–cysteine 247 and cysteine 268–cysteine 540. An N-linked (GlcNAc...) (complex) asparagine glycan is attached at asparagine 285. Residues 290–450 (NKNVVFVIDI…FNFLEVMSME (161 aa)) form the VWFA domain. Residues 387–911 (SLPELSNHAS…YTDYIVPDIF (525 aa)) are hyaluronan-binding. A phosphothreonine mark is found at threonine 402 and threonine 407. A glycan (N-linked (GlcNAc...) (complex) asparagine) is linked at asparagine 588. O-linked (GalNAc...) threonine glycosylation is present at threonine 653. Aspartate 672 is modified (aspartate 1-(chondroitin 4-sulfate)-ester). Positions 673–911 (PHFIIHVPQK…YTDYIVPDIF (239 aa)) are excised as a propeptide. A glycan (N-linked (GlcNAc...) asparagine) is linked at asparagine 750.

The protein belongs to the ITIH family. As to quaternary structure, I-alpha-I plasma protease inhibitors are assembled from one or two heavy chains (HC) and one light chain, bikunin. Inter-alpha-inhibitor (I-alpha-I) is composed of ITIH1/HC1, ITIH2/HC2 and bikunin. Interacts with TNFAIP6 (via Link and CUB domains). Post-translationally, heavy chains are linked to bikunin via chondroitin 4-sulfate esterified to the alpha-carboxyl of the C-terminal aspartate after propeptide cleavage. In terms of processing, the S-linked glycan is composed of two 6-carbon sugars, possibly Glc or Gal.

The protein localises to the secreted. Its function is as follows. May act as a carrier of hyaluronan in serum or as a binding protein between hyaluronan and other matrix protein, including those on cell surfaces in tissues to regulate the localization, synthesis and degradation of hyaluronan which are essential to cells undergoing biological processes. Functionally, contains a potential peptide which could stimulate a broad spectrum of phagocytotic cells. This is Inter-alpha-trypsin inhibitor heavy chain H1 (ITIH1) from Homo sapiens (Human).